The chain runs to 89 residues: Small ribosomal subunit protein bS20 (89 aa).

This sequence belongs to the bacterial ribosomal protein bS20 family.

Binds directly to 16S ribosomal RNA. The sequence is that of Small ribosomal subunit protein bS20 from Stenotrophomonas maltophilia (strain R551-3).